Consider the following 41-residue polypeptide: Large ribosomal subunit protein bL36 (41 aa).

This sequence belongs to the bacterial ribosomal protein bL36 family.

In Mesorhizobium japonicum (strain LMG 29417 / CECT 9101 / MAFF 303099) (Mesorhizobium loti (strain MAFF 303099)), this protein is Large ribosomal subunit protein bL36.